The sequence spans 147 residues: Hemoglobin subunit epsilon (147 aa).

Residues 3–147 (HFTAEEKSVI…VATALAHKYH (145 aa)) enclose the Globin domain. S51 bears the Phosphoserine mark. H64 and H93 together coordinate heme b.

Belongs to the globin family. As to expression, red blood cells.

Functionally, hemoglobin epsilon chain is a beta-type chain found in early embryos. The polypeptide is Hemoglobin subunit epsilon (HBE1) (Sus scrofa (Pig)).